Reading from the N-terminus, the 44-residue chain is Photosystem II reaction center protein K (44 aa).

The propeptide occupies Met-1–Ala-7. Residues Ile-19–Ala-39 traverse the membrane as a helical segment.

Belongs to the PsbK family. In terms of assembly, PSII is composed of 1 copy each of membrane proteins PsbA, PsbB, PsbC, PsbD, PsbE, PsbF, PsbH, PsbI, PsbJ, PsbK, PsbL, PsbM, PsbT, PsbX, PsbY, PsbZ, Psb30/Ycf12, at least 3 peripheral proteins of the oxygen-evolving complex and a large number of cofactors. It forms dimeric complexes.

Its subcellular location is the plastid. It is found in the chloroplast thylakoid membrane. Its function is as follows. One of the components of the core complex of photosystem II (PSII). PSII is a light-driven water:plastoquinone oxidoreductase that uses light energy to abstract electrons from H(2)O, generating O(2) and a proton gradient subsequently used for ATP formation. It consists of a core antenna complex that captures photons, and an electron transfer chain that converts photonic excitation into a charge separation. The polypeptide is Photosystem II reaction center protein K (Tupiella akineta (Green alga)).